We begin with the raw amino-acid sequence, 240 residues long: MADS-box protein SVP (240 aa).

Residues 3–57 (REKIQIRKIDNATARQVTFSKRRRGLFKKAEELSVLCDADVALIIFSSTGKLFEF) enclose the MADS-box domain. One can recognise a K-box domain in the interval 87–180 (QLVENSDHAR…GTQLTEENER (94 aa)). Residues 202–240 (VYEEGQSSESITNAGNSTGAPVDSESSDTSLRLGLPYGG) are disordered. The span at 206–220 (GQSSESITNAGNSTG) shows a compositional bias: polar residues.

Forms a heterodimer with AP1 and SVP. Interacts with the SEU-LUG corepressor complex when complexed to AP1. Interacts with AGL15. Interacts with AGL16. In terms of tissue distribution, detected in roots and leaves. Expressed at very low levels in flowers and siliques. Present in floral meristems.

The protein resides in the nucleus. Its function is as follows. Transcription repressor that inhibit floral transition in the autonomous flowering pathway, independent of photoperiod and temperature. Acts in a dosage-dependent manner. Together with AGL24 and AP1, controls the identity of the floral meristem and regulates expression of class B, C and E genes. Promotes EFM expression to suppress flowering. The protein is MADS-box protein SVP of Arabidopsis thaliana (Mouse-ear cress).